Reading from the N-terminus, the 236-residue chain is 2,3,4,5-tetrahydropyridine-2,6-dicarboxylate N-acetyltransferase (236 aa).

This sequence belongs to the transferase hexapeptide repeat family. DapH subfamily.

The catalysed reaction is (S)-2,3,4,5-tetrahydrodipicolinate + acetyl-CoA + H2O = L-2-acetamido-6-oxoheptanedioate + CoA. It participates in amino-acid biosynthesis; L-lysine biosynthesis via DAP pathway; LL-2,6-diaminopimelate from (S)-tetrahydrodipicolinate (acetylase route): step 1/3. Catalyzes the transfer of an acetyl group from acetyl-CoA to tetrahydrodipicolinate. This is 2,3,4,5-tetrahydropyridine-2,6-dicarboxylate N-acetyltransferase from Clostridium botulinum (strain Okra / Type B1).